A 337-amino-acid chain; its full sequence is Pyridoxal 5'-phosphate synthase subunit PdxS (337 aa).

Aspartate 65 contributes to the D-ribose 5-phosphate binding site. Lysine 122 (schiff-base intermediate with D-ribose 5-phosphate) is an active-site residue. Glycine 194 lines the D-ribose 5-phosphate pocket. Lysine 206 is a binding site for D-glyceraldehyde 3-phosphate. Residues glycine 255 and glycine 276–serine 277 each bind D-ribose 5-phosphate.

This sequence belongs to the PdxS/SNZ family. In terms of assembly, in the presence of PdxT, forms a dodecamer of heterodimers.

The catalysed reaction is aldehydo-D-ribose 5-phosphate + D-glyceraldehyde 3-phosphate + L-glutamine = pyridoxal 5'-phosphate + L-glutamate + phosphate + 3 H2O + H(+). Its pathway is cofactor biosynthesis; pyridoxal 5'-phosphate biosynthesis. Its function is as follows. Catalyzes the formation of pyridoxal 5'-phosphate from ribose 5-phosphate (RBP), glyceraldehyde 3-phosphate (G3P) and ammonia. The ammonia is provided by the PdxT subunit. Can also use ribulose 5-phosphate and dihydroxyacetone phosphate as substrates, resulting from enzyme-catalyzed isomerization of RBP and G3P, respectively. In Metallosphaera sedula (strain ATCC 51363 / DSM 5348 / JCM 9185 / NBRC 15509 / TH2), this protein is Pyridoxal 5'-phosphate synthase subunit PdxS.